Consider the following 570-residue polypeptide: Zeta-carotene desaturase, chloroplastic/chromoplastic (570 aa).

Low complexity predominate over residues 1-16; sequence MASVAATTTLAPALAP. Positions 1–33 are disordered; sequence MASVAATTTLAPALAPRRARPGTGLVPPRRASA.

Belongs to the zeta carotene desaturase family. The cofactor is NAD(+). It depends on NADP(+) as a cofactor. FAD serves as cofactor.

It localises to the plastid. It is found in the chloroplast. The protein localises to the chromoplast. The enzyme catalyses 9,9'-di-cis-zeta-carotene + 2 a quinone = 7,7',9,9'-tetra-cis-lycopene + 2 a quinol. The protein operates within carotenoid biosynthesis; lycopene biosynthesis. Its function is as follows. Catalyzes the conversion of zeta-carotene to lycopene via the intermediary of neurosporene. It carries out two consecutive desaturations (introduction of double bonds) at positions C-7 and C-7'. The chain is Zeta-carotene desaturase, chloroplastic/chromoplastic (ZDS1) from Zea mays (Maize).